Reading from the N-terminus, the 423-residue chain is Imidazolonepropionase (423 aa).

Fe(3+) contacts are provided by histidine 78 and histidine 80. The Zn(2+) site is built by histidine 78 and histidine 80. Residues arginine 87, tyrosine 150, and histidine 183 each coordinate 4-imidazolone-5-propanoate. Position 150 (tyrosine 150) interacts with N-formimidoyl-L-glutamate. Histidine 247 is a binding site for Fe(3+). Histidine 247 is a Zn(2+) binding site. Glutamate 250 is a 4-imidazolone-5-propanoate binding site. Aspartate 322 lines the Fe(3+) pocket. A Zn(2+)-binding site is contributed by aspartate 322. N-formimidoyl-L-glutamate is bound by residues asparagine 324 and glycine 326. Serine 327 provides a ligand contact to 4-imidazolone-5-propanoate.

It belongs to the metallo-dependent hydrolases superfamily. HutI family. Zn(2+) serves as cofactor. The cofactor is Fe(3+).

It localises to the cytoplasm. The enzyme catalyses 4-imidazolone-5-propanoate + H2O = N-formimidoyl-L-glutamate. It participates in amino-acid degradation; L-histidine degradation into L-glutamate; N-formimidoyl-L-glutamate from L-histidine: step 3/3. Catalyzes the hydrolytic cleavage of the carbon-nitrogen bond in imidazolone-5-propanoate to yield N-formimidoyl-L-glutamate. It is the third step in the universal histidine degradation pathway. The protein is Imidazolonepropionase of Bacillus cereus (strain ATCC 10987 / NRS 248).